The chain runs to 377 residues: Protein MULTIPOLAR SPINDLE 1 (377 aa).

The short motif at 117–124 is the Nuclear localization signal element; it reads LRRRFLRL.

As to expression, expressed in roots, stems, leaves, inflorescences and seedlings. Strongly expressed in meiocytes.

Its subcellular location is the nucleus. The protein localises to the cytoplasm. It localises to the cytoskeleton. The protein resides in the spindle. In terms of biological role, involved in meiotic spindle organization in meiocytes thus regulating chromosome segregation. Required for formation of meiotic DNA double-strand breaks (DSBs) during early recombination processes. This chain is Protein MULTIPOLAR SPINDLE 1, found in Arabidopsis thaliana (Mouse-ear cress).